We begin with the raw amino-acid sequence, 275 residues long: Transcription regulator AOL_s00215g275 (275 aa).

Disordered stretches follow at residues threonine 13–glycine 65 and isoleucine 84–leucine 108. The span at proline 14–arginine 26 shows a compositional bias: polar residues. Residues threonine 27–proline 40 are compositionally biased toward low complexity. Positions threonine 47–leucine 60 are enriched in polar residues. The span at lysine 88–glutamine 106 shows a compositional bias: basic residues.

Regulatory protein; part of the gene cluster that mediates the biosynthesis of sesquiterpenyl epoxy-cyclohexenoids (SECs) such as anthrobotrisins and arthrosporols, metabolites that possess a novel hybrid carbon skeleton consisting of a polyketide-derived epoxycyclohexenol combined with a terpenoid-derived monocyclic sesquiterpenol substructure (PKS-PTS hybrid). The SEC pathway plays an important role for fungal soil colonization via decreasing fungal nematode-capturing ability. AOL_s00215g275 can perform multiple functions in fungal growth and development via regulating the SEC biosynthesis, TCA cycle, and septa formation. Also involved in inhibiting conidial formation, germination, and nematicidal activity but promotes trap production. Plays a role in fungal resistances and significantly regulates the fungal morphology and responses to chemical stressors such as cell-wall-perturbing agents (SDS and Congo red), osmotic agents (NaCl and sorbitol), or the oxidant H(2)O(2). The protein is Transcription regulator AOL_s00215g275 of Arthrobotrys oligospora (strain ATCC 24927 / CBS 115.81 / DSM 1491) (Nematode-trapping fungus).